A 211-amino-acid chain; its full sequence is ATP-dependent dethiobiotin synthetase BioD 2 (211 aa).

ATP is bound at residue 13-18 (DIGKTI). Position 17 (Thr17) interacts with Mg(2+). The active site involves Lys38. Residue Thr42 participates in substrate binding. ATP contacts are provided by residues Asp50, 115–118 (EGAG), and 175–176 (NT). Residues Asp50 and Glu115 each coordinate Mg(2+).

The protein belongs to the dethiobiotin synthetase family. Homodimer. It depends on Mg(2+) as a cofactor.

Its subcellular location is the cytoplasm. It catalyses the reaction (7R,8S)-7,8-diammoniononanoate + CO2 + ATP = (4R,5S)-dethiobiotin + ADP + phosphate + 3 H(+). Its pathway is cofactor biosynthesis; biotin biosynthesis; biotin from 7,8-diaminononanoate: step 1/2. In terms of biological role, catalyzes a mechanistically unusual reaction, the ATP-dependent insertion of CO2 between the N7 and N8 nitrogen atoms of 7,8-diaminopelargonic acid (DAPA, also called 7,8-diammoniononanoate) to form a ureido ring. The sequence is that of ATP-dependent dethiobiotin synthetase BioD 2 from Haemophilus ducreyi (strain 35000HP / ATCC 700724).